The chain runs to 666 residues: Endogenous retrovirus group K member 7 Gag polyprotein (666 aa).

A lipid anchor (N-myristoyl glycine) is attached at glycine 2. Disordered regions lie at residues 165-205 and 217-264; these read GKGP…NKTQ and ELQY…GSEL. A compositionally biased stretch (pro residues) spans 232–247; it reads GMPPAPQGRAPYPQPP. CCHC-type zinc fingers lie at residues 544 to 561 and 580 to 597; these read GKCY…NCPV and DLCP…QCRS. Residues 598 to 641 are disordered; it reads KFDKNGQPLSGNEQRGQPQAPQQTGAFPIQPFVPQGFQEQQPPL. Polar residues predominate over residues 604 to 622; that stretch reads QPLSGNEQRGQPQAPQQTG.

Belongs to the beta type-B retroviral Gag protein family. HERV class-II K(HML-2) gag subfamily. In terms of processing, specific enzymatic cleavages may yield mature proteins. Myristoylation is essential for retroviral assembly. Alteration of the glycine residue leads to a block in the budding of particles and an accumulation of Gag inside the cell.

It localises to the cell membrane. Its function is as follows. The products of the Gag polyproteins of infectious retroviruses perform highly complex orchestrated tasks during the assembly, budding, maturation, and infection stages of the viral replication cycle. During viral assembly, the proteins form membrane associations and self-associations that ultimately result in budding of an immature virion from the infected cell. Gag precursors also function during viral assembly to selectively bind and package two plus strands of genomic RNA. Endogenous Gag proteins may have kept, lost or modified their original function during evolution. This Homo sapiens (Human) protein is Endogenous retrovirus group K member 7 Gag polyprotein (ERVK-7).